Here is a 341-residue protein sequence, read N- to C-terminus: Methionine import ATP-binding protein MetN 3 (341 aa).

An ABC transporter domain is found at 2–241 (IEFQNVTKTF…PSHETTKRFI (240 aa)). Position 38–45 (38–45 (GFSGAGKS)) interacts with ATP.

It belongs to the ABC transporter superfamily. Methionine importer (TC 3.A.1.24) family. As to quaternary structure, the complex is composed of two ATP-binding proteins (MetN), two transmembrane proteins (MetI) and a solute-binding protein (MetQ).

The protein localises to the cell membrane. It carries out the reaction L-methionine(out) + ATP + H2O = L-methionine(in) + ADP + phosphate + H(+). The enzyme catalyses D-methionine(out) + ATP + H2O = D-methionine(in) + ADP + phosphate + H(+). Part of the ABC transporter complex MetNIQ involved in methionine import. Responsible for energy coupling to the transport system. In Oceanobacillus iheyensis (strain DSM 14371 / CIP 107618 / JCM 11309 / KCTC 3954 / HTE831), this protein is Methionine import ATP-binding protein MetN 3.